A 395-amino-acid chain; its full sequence is tRNA-specific 2-thiouridylase MnmA (395 aa).

ATP contacts are provided by residues 7–14 and M33; that span reads GLSGGVDS. An interaction with target base in tRNA region spans residues 95–97; the sequence is NPD. C100 acts as the Nucleophile in catalysis. C100 and C200 are disulfide-bonded. ATP is bound at residue G124. The segment at 150 to 152 is interaction with tRNA; that stretch reads KDQ. Residue C200 is the Cysteine persulfide intermediate of the active site. The interaction with tRNA stretch occupies residues 346 to 347; sequence RY.

The protein belongs to the MnmA/TRMU family.

The protein resides in the cytoplasm. The enzyme catalyses S-sulfanyl-L-cysteinyl-[protein] + uridine(34) in tRNA + AH2 + ATP = 2-thiouridine(34) in tRNA + L-cysteinyl-[protein] + A + AMP + diphosphate + H(+). Functionally, catalyzes the 2-thiolation of uridine at the wobble position (U34) of tRNA, leading to the formation of s(2)U34. This is tRNA-specific 2-thiouridylase MnmA from Flavobacterium johnsoniae (strain ATCC 17061 / DSM 2064 / JCM 8514 / BCRC 14874 / CCUG 350202 / NBRC 14942 / NCIMB 11054 / UW101) (Cytophaga johnsonae).